Reading from the N-terminus, the 457-residue chain is Chromosomal replication initiator protein DnaA (457 aa).

Residues 1-71 (MSPSIWEKCL…LLKNFCNINT (71 aa)) form a domain I, interacts with DnaA modulators region. The domain II stretch occupies residues 71–119 (TTPTLMLKICKPKIIQKKFFNELTLKKNILNSKLTYNVNTKLSNIIYSS). Residues 120 to 337 (EINTNYTFQN…GALNKILANS (218 aa)) are domain III, AAA+ region. Residues Gly-165, Gly-167, Lys-168, and Thr-169 each coordinate ATP. The interval 338–457 (DSKKKIITIN…FLTLLKILSS (120 aa)) is domain IV, binds dsDNA.

It belongs to the DnaA family. Oligomerizes as a right-handed, spiral filament on DNA at oriC.

The protein resides in the cytoplasm. Its function is as follows. Plays an essential role in the initiation and regulation of chromosomal replication. ATP-DnaA binds to the origin of replication (oriC) to initiate formation of the DNA replication initiation complex once per cell cycle. Binds the DnaA box (a 9 base pair repeat at the origin) and separates the double-stranded (ds)DNA. Forms a right-handed helical filament on oriC DNA; dsDNA binds to the exterior of the filament while single-stranded (ss)DNA is stabiized in the filament's interior. The ATP-DnaA-oriC complex binds and stabilizes one strand of the AT-rich DNA unwinding element (DUE), permitting loading of DNA polymerase. After initiation quickly degrades to an ADP-DnaA complex that is not apt for DNA replication. Binds acidic phospholipids. The sequence is that of Chromosomal replication initiator protein DnaA from Buchnera aphidicola subsp. Baizongia pistaciae (strain Bp).